Here is a 363-residue protein sequence, read N- to C-terminus: Type-2 angiotensin II receptor (363 aa).

Topologically, residues 1–45 (MKGNSTLATTSKNITSGLHFGLVNISGNNESTLNCSQKPSDKHLD) are extracellular. N4, N13, N24, N29, and N34 each carry an N-linked (GlcNAc...) asparagine glycan. Intrachain disulfides connect C35-C290 and C117-C195. A helical membrane pass occupies residues 46–70 (AIPILYYIIFVIGFLVNIVVVTLFC). Topologically, residues 71-80 (CQKGPKKVSS) are cytoplasmic. The helical transmembrane segment at 81 to 104 (IYIFNLAVADLLLLATLPLWATYY) threads the bilayer. Residues Y103 and Y104 each contribute to the angiotensin II site. Residues 105–114 (SYRYDWLFGP) are Extracellular-facing. A helical transmembrane segment spans residues 115 to 140 (VMCKVFGSFLTLNMFASIFFITCMSV). Residues 141 to 159 (DRYQSVIYPFLSQRRNPWQ) lie on the Cytoplasmic side of the membrane. A helical transmembrane segment spans residues 160–181 (ASYIVPLVWCMACLSSLPTFYF). Angiotensin II is bound by residues R182, Y204, and K215. The Extracellular segment spans residues 182–206 (RDVRTIEYLGVNACIMAFPPEKYAQ). A helical transmembrane segment spans residues 207 to 232 (WSAGIALMKNILGFIIPLIFIATCYF). Topologically, residues 233 to 257 (GIRKHLLKTNSYGKNRITRDQVLKM) are cytoplasmic. Residues 258 to 281 (AAAVVLAFIICWLPFHVLTFLDAL) form a helical membrane-spanning segment. D279 is a binding site for angiotensin II. Residues 282–294 (AWMGVINSCEVIA) are Extracellular-facing. Residues 295–320 (VIDLALPFAILLGFTNSCVNPFLYCF) form a helical membrane-spanning segment. D297 is an angiotensin II binding site. Residues 321-363 (VGNRFQQKLRSVFRVPITWLQGKRESMSCRKSSSLREMETFVS) lie on the Cytoplasmic side of the membrane. The helix VIII stretch occupies residues 324-333 (RFQQKLRSVF).

The protein belongs to the G-protein coupled receptor 1 family. As to quaternary structure, interacts with MTUS1. As to expression, in adult, highly expressed in myometrium with lower levels in adrenal gland and fallopian tube. Expressed in the cerebellum. Very highly expressed in fetal kidney and intestine.

It localises to the cell membrane. Functionally, receptor for angiotensin II, a vasoconstricting peptide. Signals primarily via a non-canonical G-protein- and beta-arrestin independent pathways. Cooperates with MTUS1 to inhibit ERK2 activation and cell proliferation. This is Type-2 angiotensin II receptor from Homo sapiens (Human).